The chain runs to 156 residues: Cyanate hydratase (156 aa).

Residues Arg-96, Glu-99, and Ser-122 contribute to the active site.

The protein belongs to the cyanase family.

The enzyme catalyses cyanate + hydrogencarbonate + 3 H(+) = NH4(+) + 2 CO2. Its function is as follows. Catalyzes the reaction of cyanate with bicarbonate to produce ammonia and carbon dioxide. The protein is Cyanate hydratase of Pseudomonas entomophila (strain L48).